Consider the following 321-residue polypeptide: o-succinylbenzoate synthase (321 aa).

The active-site Proton donor is K134. D162, E191, and D214 together coordinate Mg(2+). The active-site Proton acceptor is K236.

Belongs to the mandelate racemase/muconate lactonizing enzyme family. MenC type 1 subfamily. Requires a divalent metal cation as cofactor.

The catalysed reaction is (1R,6R)-6-hydroxy-2-succinyl-cyclohexa-2,4-diene-1-carboxylate = 2-succinylbenzoate + H2O. It functions in the pathway quinol/quinone metabolism; 1,4-dihydroxy-2-naphthoate biosynthesis; 1,4-dihydroxy-2-naphthoate from chorismate: step 4/7. It participates in quinol/quinone metabolism; menaquinone biosynthesis. Converts 2-succinyl-6-hydroxy-2,4-cyclohexadiene-1-carboxylate (SHCHC) to 2-succinylbenzoate (OSB). The protein is o-succinylbenzoate synthase of Enterobacter sp. (strain 638).